The chain runs to 476 residues: ATP synthase subunit beta, chloroplastic (476 aa).

Position 155-162 (155-162) interacts with ATP; it reads GGAGVGKT.

Belongs to the ATPase alpha/beta chains family. In terms of assembly, F-type ATPases have 2 components, CF(1) - the catalytic core - and CF(0) - the membrane proton channel. CF(1) has five subunits: alpha(3), beta(3), gamma(1), delta(1), epsilon(1). CF(0) has four main subunits: a(1), b(1), b'(1) and c(9-12).

It is found in the plastid. The protein resides in the chloroplast thylakoid membrane. It carries out the reaction ATP + H2O + 4 H(+)(in) = ADP + phosphate + 5 H(+)(out). Produces ATP from ADP in the presence of a proton gradient across the membrane. The catalytic sites are hosted primarily by the beta subunits. In Emiliania huxleyi (Coccolithophore), this protein is ATP synthase subunit beta, chloroplastic.